We begin with the raw amino-acid sequence, 351 residues long: L-threonine 3-dehydrogenase (351 aa).

C39 is a binding site for Zn(2+). Catalysis depends on charge relay system residues T41 and H44. 6 residues coordinate Zn(2+): H64, E65, C94, C97, C100, and C108. NAD(+) is bound by residues I176, D196, R201, 271–273, and 295–296; these read LGI and IY.

Belongs to the zinc-containing alcohol dehydrogenase family. In terms of assembly, homotetramer. Zn(2+) is required as a cofactor.

The protein resides in the cytoplasm. It carries out the reaction L-threonine + NAD(+) = (2S)-2-amino-3-oxobutanoate + NADH + H(+). The protein operates within amino-acid degradation; L-threonine degradation via oxydo-reductase pathway; glycine from L-threonine: step 1/2. In terms of biological role, catalyzes the NAD(+)-dependent oxidation of L-threonine to 2-amino-3-ketobutyrate. The protein is L-threonine 3-dehydrogenase of Francisella tularensis subsp. holarctica (strain OSU18).